Consider the following 310-residue polypeptide: Methionyl-tRNA formyltransferase (310 aa).

Position 109–112 (Ser-109–Pro-112) interacts with (6S)-5,6,7,8-tetrahydrofolate.

Belongs to the Fmt family.

It catalyses the reaction L-methionyl-tRNA(fMet) + (6R)-10-formyltetrahydrofolate = N-formyl-L-methionyl-tRNA(fMet) + (6S)-5,6,7,8-tetrahydrofolate + H(+). Attaches a formyl group to the free amino group of methionyl-tRNA(fMet). The formyl group appears to play a dual role in the initiator identity of N-formylmethionyl-tRNA by promoting its recognition by IF2 and preventing the misappropriation of this tRNA by the elongation apparatus. The sequence is that of Methionyl-tRNA formyltransferase from Parvibaculum lavamentivorans (strain DS-1 / DSM 13023 / NCIMB 13966).